We begin with the raw amino-acid sequence, 218 residues long: Thiopurine S-methyltransferase (218 aa).

The S-adenosyl-L-methionine site is built by Trp11, Leu46, Glu67, and Arg122.

Belongs to the class I-like SAM-binding methyltransferase superfamily. TPMT family.

It is found in the cytoplasm. It carries out the reaction S-adenosyl-L-methionine + a thiopurine = S-adenosyl-L-homocysteine + a thiopurine S-methylether.. The polypeptide is Thiopurine S-methyltransferase (Vibrio cholerae serotype O1 (strain ATCC 39541 / Classical Ogawa 395 / O395)).